The chain runs to 140 residues: Large-conductance mechanosensitive channel (140 aa).

A run of 3 helical transmembrane segments spans residues 14–34 (VLDL…VKSL), 37–57 (YLIN…DWVL), and 66–86 (FGSF…VFIL).

It belongs to the MscL family. Homopentamer.

The protein resides in the cell membrane. Channel that opens in response to stretch forces in the membrane lipid bilayer. May participate in the regulation of osmotic pressure changes within the cell. The sequence is that of Large-conductance mechanosensitive channel from Pediococcus pentosaceus (strain ATCC 25745 / CCUG 21536 / LMG 10740 / 183-1w).